The primary structure comprises 142 residues: Large ribosomal subunit protein bL21 (142 aa).

The span at 74-84 shows a compositional bias: basic residues; it reads RRRQNSKRTRG. Residues 74-142 form a disordered region; the sequence is RRRQNSKRTR…KAATKAESAE (69 aa). The segment covering 107–125 has biased composition (basic and acidic residues); sequence KAAEKKAPKADAAEGEAAK. The segment covering 126 to 135 has biased composition (basic residues); sequence PKKAAPKKAA.

Belongs to the bacterial ribosomal protein bL21 family. Part of the 50S ribosomal subunit. Contacts protein L20.

Functionally, this protein binds to 23S rRNA in the presence of protein L20. This Brucella abortus (strain S19) protein is Large ribosomal subunit protein bL21.